Here is a 309-residue protein sequence, read N- to C-terminus: Probable manganese-dependent inorganic pyrophosphatase (309 aa).

Mn(2+)-binding residues include His9, Asp13, Asp15, Asp75, His97, and Asp149.

It belongs to the PPase class C family. Mn(2+) is required as a cofactor.

Its subcellular location is the cytoplasm. The catalysed reaction is diphosphate + H2O = 2 phosphate + H(+). The chain is Probable manganese-dependent inorganic pyrophosphatase from Bacillus anthracis (strain CDC 684 / NRRL 3495).